Consider the following 46-residue polypeptide: DNA-directed RNA polymerase subunit Rpo12 (46 aa).

Residues cysteine 8, cysteine 23, and cysteine 26 each coordinate Zn(2+).

The protein belongs to the archaeal Rpo12/eukaryotic RPC10 RNA polymerase subunit family. As to quaternary structure, part of the RNA polymerase complex. Zn(2+) serves as cofactor.

Its subcellular location is the cytoplasm. The catalysed reaction is RNA(n) + a ribonucleoside 5'-triphosphate = RNA(n+1) + diphosphate. Its function is as follows. DNA-dependent RNA polymerase (RNAP) catalyzes the transcription of DNA into RNA using the four ribonucleoside triphosphates as substrates. This Archaeoglobus fulgidus (strain ATCC 49558 / DSM 4304 / JCM 9628 / NBRC 100126 / VC-16) protein is DNA-directed RNA polymerase subunit Rpo12.